The chain runs to 208 residues: Outer-membrane lipoprotein carrier protein (208 aa).

A signal peptide spans 1 to 22 (MKKRLCAVLLASPLLFSAAVFA).

The protein belongs to the LolA family. In terms of assembly, monomer.

It localises to the periplasm. Participates in the translocation of lipoproteins from the inner membrane to the outer membrane. Only forms a complex with a lipoprotein if the residue after the N-terminal Cys is not an aspartate (The Asp acts as a targeting signal to indicate that the lipoprotein should stay in the inner membrane). In Shewanella baltica (strain OS195), this protein is Outer-membrane lipoprotein carrier protein.